The sequence spans 208 residues: Holliday junction branch migration complex subunit RuvA (208 aa).

The tract at residues 1–64 (MIGKLKGIVD…EDMIRLYGFR (64 aa)) is domain I. The segment at 65–143 (VDAEREWFRL…AFAPIDPALI (79 aa)) is domain II. The tract at residues 144–152 (ALTGAVEDR) is flexible linker. The segment at 153 to 208 (TAPQPVADAISALVNLGYAQIQASAAIAAALKGLGEEAGTVEAKTLIRLGLRELAR) is domain III.

Belongs to the RuvA family. As to quaternary structure, homotetramer. Forms an RuvA(8)-RuvB(12)-Holliday junction (HJ) complex. HJ DNA is sandwiched between 2 RuvA tetramers; dsDNA enters through RuvA and exits via RuvB. An RuvB hexamer assembles on each DNA strand where it exits the tetramer. Each RuvB hexamer is contacted by two RuvA subunits (via domain III) on 2 adjacent RuvB subunits; this complex drives branch migration. In the full resolvosome a probable DNA-RuvA(4)-RuvB(12)-RuvC(2) complex forms which resolves the HJ.

It localises to the cytoplasm. The RuvA-RuvB-RuvC complex processes Holliday junction (HJ) DNA during genetic recombination and DNA repair, while the RuvA-RuvB complex plays an important role in the rescue of blocked DNA replication forks via replication fork reversal (RFR). RuvA specifically binds to HJ cruciform DNA, conferring on it an open structure. The RuvB hexamer acts as an ATP-dependent pump, pulling dsDNA into and through the RuvAB complex. HJ branch migration allows RuvC to scan DNA until it finds its consensus sequence, where it cleaves and resolves the cruciform DNA. The chain is Holliday junction branch migration complex subunit RuvA from Methylorubrum extorquens (strain CM4 / NCIMB 13688) (Methylobacterium extorquens).